Here is a 485-residue protein sequence, read N- to C-terminus: Cysteine--tRNA ligase (485 aa).

Cys-27 is a Zn(2+) binding site. The 'HIGH' region motif lies at 29 to 39 (ITAYDLCHIGH). Zn(2+) contacts are provided by Cys-208, His-233, and Glu-237. The 'KMSKS' region signature appears at 265–269 (KMSKS). Lys-268 contributes to the ATP binding site.

This sequence belongs to the class-I aminoacyl-tRNA synthetase family. As to quaternary structure, monomer. The cofactor is Zn(2+).

It localises to the cytoplasm. The catalysed reaction is tRNA(Cys) + L-cysteine + ATP = L-cysteinyl-tRNA(Cys) + AMP + diphosphate. The polypeptide is Cysteine--tRNA ligase (Nitratidesulfovibrio vulgaris (strain DP4) (Desulfovibrio vulgaris)).